Consider the following 269-residue polypeptide: Phosphonoacetaldehyde hydrolase (269 aa).

Asp10 (nucleophile) is an active-site residue. The Mg(2+) site is built by Asp10 and Ala12. Lys52 (schiff-base intermediate with substrate) is an active-site residue. Asp186 is a binding site for Mg(2+).

The protein belongs to the HAD-like hydrolase superfamily. PhnX family. In terms of assembly, homodimer. The cofactor is Mg(2+).

The catalysed reaction is phosphonoacetaldehyde + H2O = acetaldehyde + phosphate + H(+). Involved in phosphonate degradation. The sequence is that of Phosphonoacetaldehyde hydrolase from Salmonella typhi.